The chain runs to 140 residues: ATP synthase epsilon chain (140 aa).

The protein belongs to the ATPase epsilon chain family. In terms of assembly, F-type ATPases have 2 components, CF(1) - the catalytic core - and CF(0) - the membrane proton channel. CF(1) has five subunits: alpha(3), beta(3), gamma(1), delta(1), epsilon(1). CF(0) has three main subunits: a, b and c.

Its subcellular location is the cell inner membrane. Its function is as follows. Produces ATP from ADP in the presence of a proton gradient across the membrane. This Janthinobacterium sp. (strain Marseille) (Minibacterium massiliensis) protein is ATP synthase epsilon chain.